The primary structure comprises 426 residues: Dihydroorotase (426 aa).

Residues His58 and His60 each contribute to the Zn(2+) site. Residues 60–62 and Asn92 each bind substrate; that span reads HLR. 3 residues coordinate Zn(2+): Asp150, His177, and His230. Asn276 provides a ligand contact to substrate. Zn(2+) is bound at residue Asp303. Asp303 is an active-site residue. Residues His307 and 321-322 contribute to the substrate site; that span reads FG.

It belongs to the metallo-dependent hydrolases superfamily. DHOase family. Class I DHOase subfamily. Zn(2+) serves as cofactor.

It catalyses the reaction (S)-dihydroorotate + H2O = N-carbamoyl-L-aspartate + H(+). It functions in the pathway pyrimidine metabolism; UMP biosynthesis via de novo pathway; (S)-dihydroorotate from bicarbonate: step 3/3. Catalyzes the reversible cyclization of carbamoyl aspartate to dihydroorotate. The sequence is that of Dihydroorotase from Listeria monocytogenes serotype 4b (strain CLIP80459).